A 307-amino-acid polypeptide reads, in one-letter code: Isethionate sulfite-lyase activating enzyme (307 aa).

A Radical SAM core domain is found at 22-307; sequence HDGPGIRTVV…EAVVAQTADS (286 aa). The [4Fe-4S] cluster site is built by C36, C40, C43, C62, C68, C71, C75, C95, C98, C102, and C106. S-adenosyl-L-methionine is bound at residue 42–44; sequence WCS. 2 4Fe-4S ferredoxin-type domains span residues 53-85 and 86-117; these read VELA…RAED and DTIS…YGAH. S-adenosyl-L-methionine contacts are provided by residues G146, 195-197, and H268; that span reads DIK.

It belongs to the organic radical-activating enzymes family. As to quaternary structure, monomer. It depends on [4Fe-4S] cluster as a cofactor.

The catalysed reaction is glycyl-[protein] + reduced [flavodoxin] + S-adenosyl-L-methionine = glycin-2-yl radical-[protein] + semiquinone [flavodoxin] + 5'-deoxyadenosine + L-methionine + H(+). The protein operates within organosulfur degradation; alkanesulfonate degradation. Functionally, involved in an anaerobic respiration pathway that converts the sulfonate isethionate (2-hydroxyethanesulfonate) to ammonia, acetate and sulfide. Catalyzes activation of the isethionate sulfite-lyase IseG under anaerobic conditions by generation of an organic free radical on a glycine residue, via a homolytic cleavage of S-adenosyl-L-methionine (SAM). This Nitratidesulfovibrio vulgaris (strain ATCC 29579 / DSM 644 / CCUG 34227 / NCIMB 8303 / VKM B-1760 / Hildenborough) (Desulfovibrio vulgaris) protein is Isethionate sulfite-lyase activating enzyme.